The following is a 316-amino-acid chain: Pseudouridine-5'-phosphate glycosidase (316 aa).

Residue glutamate 31 is the Proton donor of the active site. Substrate contacts are provided by lysine 92 and valine 112. A Mn(2+)-binding site is contributed by aspartate 144. 146–148 lines the substrate pocket; the sequence is SAD. The Nucleophile role is filled by lysine 165.

It belongs to the pseudouridine-5'-phosphate glycosidase family. In terms of assembly, homotrimer. Requires Mn(2+) as cofactor.

It catalyses the reaction D-ribose 5-phosphate + uracil = psi-UMP + H2O. Functionally, catalyzes the reversible cleavage of pseudouridine 5'-phosphate (PsiMP) to ribose 5-phosphate and uracil. Functions biologically in the cleavage direction, as part of a pseudouridine degradation pathway. Part of an operon that could be involved in the biosynthesis of the blue pigment indigoidine, which is implicated in pathogenicity and protection from oxidative stress. The polypeptide is Pseudouridine-5'-phosphate glycosidase (Dickeya dadantii (strain 3937) (Erwinia chrysanthemi (strain 3937))).